The chain runs to 459 residues: Glutathione reductase (459 aa).

Residues Ser14, Gly15, Glu34, Thr41, Cys42, Lys50, and Ala114 each contribute to the FAD site. A glutathione-binding site is contributed by Ser14. Cys42 and Cys47 are disulfide-bonded. NADP(+)-binding residues include Ile177, Glu180, Arg197, Lys203, and Gly262. The FAD site is built by Asp313 and Thr321. Position 329 (Arg329) interacts with glutathione. An NADP(+)-binding site is contributed by Ala351. His448 contributes to the FAD binding site. Catalysis depends on His448, which acts as the Proton acceptor.

It belongs to the class-I pyridine nucleotide-disulfide oxidoreductase family. As to quaternary structure, homodimer. Requires FAD as cofactor.

It localises to the cytoplasm. It catalyses the reaction 2 glutathione + NADP(+) = glutathione disulfide + NADPH + H(+). Catalyzes the reduction of glutathione disulfide (GSSG) to reduced glutathione (GSH). Constitutes the major mechanism to maintain a high GSH:GSSG ratio in the cytosol. This Nostoc sp. (strain PCC 7120 / SAG 25.82 / UTEX 2576) protein is Glutathione reductase (gor).